The sequence spans 224 residues: UPF0758 protein Nmul_A2138 (224 aa).

The 123-residue stretch at 102–224 (AMDSPGPVRA…TLSFAEQGLI (123 aa)) folds into the MPN domain. Zn(2+) contacts are provided by His173, His175, and Asp186. The JAMM motif motif lies at 173-186 (HNHPSGAAEPSHAD).

This sequence belongs to the UPF0758 family.

This Nitrosospira multiformis (strain ATCC 25196 / NCIMB 11849 / C 71) protein is UPF0758 protein Nmul_A2138.